The primary structure comprises 295 residues: uncharacterized protein (295 aa).

The signal sequence occupies residues 1-19; that stretch reads MHKLLLIITVFFTFNVAQA.

This is an uncharacterized protein from Rickettsia prowazekii (strain Madrid E).